Here is a 156-residue protein sequence, read N- to C-terminus: Protein eva-1 homolog A (156 aa).

A helical transmembrane segment spans residues 40–60 (ALYFVSGVCIGLFLTLAALVM). Residues 79-100 (DRECSDSSDSEDGSEDTASDLS) are disordered. Residues 84 to 96 (DSSDSEDGSEDTA) show a composition bias toward acidic residues. A Phosphothreonine modification is found at threonine 110. A Phosphoserine modification is found at serine 118.

This sequence belongs to the EVA1 family.

The protein resides in the endoplasmic reticulum membrane. It is found in the lysosome membrane. Acts as a regulator of programmed cell death, mediating both autophagy and apoptosis. In Mus musculus (Mouse), this protein is Protein eva-1 homolog A (Eva1a).